Reading from the N-terminus, the 339-residue chain is D-erythrose-4-phosphate dehydrogenase (339 aa).

Residue 11–12 (RI) participates in NAD(+) binding. Residues 158–160 (SCT), R204, 217–218 (TK), and R240 contribute to the substrate site. C159 (nucleophile) is an active-site residue. NAD(+) is bound at residue N322.

It belongs to the glyceraldehyde-3-phosphate dehydrogenase family. Epd subfamily. As to quaternary structure, homotetramer.

It is found in the cytoplasm. The enzyme catalyses D-erythrose 4-phosphate + NAD(+) + H2O = 4-phospho-D-erythronate + NADH + 2 H(+). The protein operates within cofactor biosynthesis; pyridoxine 5'-phosphate biosynthesis; pyridoxine 5'-phosphate from D-erythrose 4-phosphate: step 1/5. Catalyzes the NAD-dependent conversion of D-erythrose 4-phosphate to 4-phosphoerythronate. In Aliivibrio fischeri (strain MJ11) (Vibrio fischeri), this protein is D-erythrose-4-phosphate dehydrogenase.